Here is a 70-residue protein sequence, read N- to C-terminus: Kappa-conotoxin-like Sx11.2 (70 aa).

The first 26 residues, 1–26 (MMFRVTSVGCLLLVIVFLNLVVPTSA), serve as a signal peptide directing secretion. Intrachain disulfides connect Cys27–Cys41, Cys34–Cys46, Cys40–Cys50, and Cys45–Cys54. 4-carboxyglutamate is present on residues Glu30, Glu35, and Glu44. At Pro53 the chain carries 4-hydroxyproline. Pro57 carries the proline amide modification. Residues 61–70 (SKLQEFFRQR) constitute a propeptide that is removed on maturation.

This sequence belongs to the conotoxin I2 superfamily. As to expression, expressed by the venom duct.

Its subcellular location is the secreted. In terms of biological role, modulator of potassium channels, specifically up-modulates the calcium and voltage-gated BK channels, has no effect on single channel conductance, but increases the open probability of BK channels. This Conus striolatus (Cone snail) protein is Kappa-conotoxin-like Sx11.2.